The chain runs to 368 residues: Probable endopolygalacturonase I (368 aa).

The first 18 residues, Met1–Ala18, serve as a signal peptide directing secretion. Positions Ala19 to Arg31 are excised as a propeptide. Cys35 and Cys50 are joined by a disulfide. 6 PbH1 repeats span residues Ala162–Glu192, Ser193–Ser214, Gly215–Ser235, Val244–Thr265, Val273–Gln295, and Ser307–Ala328. The active-site Proton donor is the Asp207. A disulfide bond links Cys209 and Cys225. His229 is a catalytic residue. 2 cysteine pairs are disulfide-bonded: Cys335–Cys340 and Cys359–Cys368.

The protein belongs to the glycosyl hydrolase 28 family.

The protein resides in the secreted. It catalyses the reaction (1,4-alpha-D-galacturonosyl)n+m + H2O = (1,4-alpha-D-galacturonosyl)n + (1,4-alpha-D-galacturonosyl)m.. In terms of biological role, involved in maceration and soft-rotting of plant tissue. Hydrolyzes the 1,4-alpha glycosidic bonds of de-esterified pectate in the smooth region of the plant cell wall. The chain is Probable endopolygalacturonase I (pgaI) from Aspergillus terreus (strain NIH 2624 / FGSC A1156).